The following is a 367-amino-acid chain: Homoserine O-acetyltransferase (367 aa).

The region spanning 44–350 (NVIMVEHAWT…AYGHDAFLLE (307 aa)) is the AB hydrolase-1 domain. Ser-150 (nucleophile) is an active-site residue. A substrate-binding site is contributed by Arg-217. Residues Asp-311 and His-344 contribute to the active site. A substrate-binding site is contributed by Asp-345.

It belongs to the AB hydrolase superfamily. MetX family. Homodimer.

It is found in the cytoplasm. The enzyme catalyses L-homoserine + acetyl-CoA = O-acetyl-L-homoserine + CoA. It participates in amino-acid biosynthesis; L-methionine biosynthesis via de novo pathway; O-acetyl-L-homoserine from L-homoserine: step 1/1. Its function is as follows. Transfers an acetyl group from acetyl-CoA to L-homoserine, forming acetyl-L-homoserine. In vitro, can also use propionyl-CoA or butiryl-CoA as acyl donor. The sequence is that of Homoserine O-acetyltransferase from Trichlorobacter lovleyi (strain ATCC BAA-1151 / DSM 17278 / SZ) (Geobacter lovleyi).